A 352-amino-acid chain; its full sequence is Molybdenum import ATP-binding protein ModC (352 aa).

Residues methionine 1–aspartate 229 enclose the ABC transporter domain. Glycine 31–threonine 38 contributes to the ATP binding site. In terms of domain architecture, Mop spans lysine 289–alanine 352.

This sequence belongs to the ABC transporter superfamily. Molybdate importer (TC 3.A.1.8) family. As to quaternary structure, the complex is composed of two ATP-binding proteins (ModC), two transmembrane proteins (ModB) and a solute-binding protein (ModA).

The protein resides in the cell inner membrane. It carries out the reaction molybdate(out) + ATP + H2O = molybdate(in) + ADP + phosphate + H(+). Its function is as follows. Part of the ABC transporter complex ModABC involved in molybdenum import. Responsible for energy coupling to the transport system. The polypeptide is Molybdenum import ATP-binding protein ModC (Pectobacterium atrosepticum (strain SCRI 1043 / ATCC BAA-672) (Erwinia carotovora subsp. atroseptica)).